The following is a 191-amino-acid chain: uncharacterized protein (191 aa).

This is an uncharacterized protein from Agrobacterium tumefaciens (strain Ach5).